We begin with the raw amino-acid sequence, 231 residues long: 2-C-methyl-D-erythritol 2,4-cyclodiphosphate synthase, chloroplastic (231 aa).

Residues 1–52 (MATSSTQLLLSSSSLFHSQITKKPFLLPATKIGVWRPKKSLSLSCRPSASVS) constitute a chloroplast transit peptide. 2 residues coordinate a divalent metal cation: Asp82 and His84. Substrate contacts are provided by residues 82-84 (DLH), 108-109 (HS), 112-120 (DVLLHCVVD), 130-132 (DIG), 135-139 (FPDSD), Asp139, 174-180 (LQRPKIS), and 205-209 (AKTHE). An a divalent metal cation-binding site is contributed by His116.

It belongs to the IspF family. Homotrimer. A divalent metal cation serves as cofactor.

It localises to the plastid. It is found in the chloroplast stroma. The enzyme catalyses 4-CDP-2-C-methyl-D-erythritol 2-phosphate = 2-C-methyl-D-erythritol 2,4-cyclic diphosphate + CMP. It participates in isoprenoid biosynthesis; isopentenyl diphosphate biosynthesis via DXP pathway; isopentenyl diphosphate from 1-deoxy-D-xylulose 5-phosphate: step 4/6. Its function is as follows. Enzyme of the plastid non-mevalonate pathway for isoprenoid biosynthesis that converts 4-diphosphocytidyl-2C-methyl-D-erythritol 2-phosphate into 2C-methyl-D-erythritol 2,4-cyclodiphosphate and CMP. Is essential for chloroplast development. In Arabidopsis thaliana (Mouse-ear cress), this protein is 2-C-methyl-D-erythritol 2,4-cyclodiphosphate synthase, chloroplastic.